The sequence spans 508 residues: UBX domain-containing protein 4 (508 aa).

Positions 1–200 (MLWFQGAIPA…PTEDLTVRVE (200 aa)) are interaction with UBQLN1. Residues 1 to 413 (MLWFQGAIPA…VHSSSGDFWT (413 aa)) are Cytoplasmic-facing. Residues 117-199 (GEASLANGSQ…RPTEDLTVRV (83 aa)) form a disordered region. The span at 122 to 190 (ANGSQSEGSV…QEPSGCSNQR (69 aa)) shows a compositional bias: polar residues. The region spanning 315 to 393 (ERSTVARIQF…ELAPSASVVL (79 aa)) is the UBX domain. An intramembrane segment occupies 414–434 (LLGTVLYPFLAIWRLISNFLF). At 435–508 (SNPPPAQTSV…TWNGNSTQQM (74 aa)) the chain is on the cytoplasmic side. Positions 450–459 (ETSNLASSSN) are enriched in polar residues. The tract at residues 450 to 508 (ETSNLASSSNSEKREPVRKRVLEKRGEDFKKEGKIYRLRTQDDGEDENNTWNGNSTQQM) is disordered. Residues 460 to 491 (SEKREPVRKRVLEKRGEDFKKEGKIYRLRTQD) are compositionally biased toward basic and acidic residues. At T489 the chain carries Phosphothreonine. Over residues 498–508 (NTWNGNSTQQM) the composition is skewed to polar residues.

Directly interacts with VCP. Interacts with UBQLN1. Forms a complex with VCP and UBQLN1.

The protein localises to the endoplasmic reticulum membrane. It localises to the nucleus envelope. Functionally, involved in endoplasmic reticulum-associated protein degradation (ERAD). Acts as a platform to recruit both UBQLN1 and VCP to the ER during ERAD. The protein is UBX domain-containing protein 4 (UBXN4) of Bos taurus (Bovine).